Reading from the N-terminus, the 407-residue chain is Elongation factor Tu (407 aa).

The tr-type G domain occupies lysine 10–glutamate 217. Residues glycine 19–threonine 26 are G1. GTP is bound at residue glycine 19–threonine 26. Position 26 (threonine 26) interacts with Mg(2+). Residues glycine 60–alanine 64 form a G2 region. The interval aspartate 81–glycine 84 is G3. Residues aspartate 81–histidine 85 and asparagine 136–aspartate 139 contribute to the GTP site. Residues asparagine 136–aspartate 139 are G4. Residues serine 184–leucine 186 are G5.

Belongs to the TRAFAC class translation factor GTPase superfamily. Classic translation factor GTPase family. EF-Tu/EF-1A subfamily. As to quaternary structure, monomer.

The protein resides in the cytoplasm. The catalysed reaction is GTP + H2O = GDP + phosphate + H(+). GTP hydrolase that promotes the GTP-dependent binding of aminoacyl-tRNA to the A-site of ribosomes during protein biosynthesis. This Teredinibacter turnerae (strain ATCC 39867 / T7901) protein is Elongation factor Tu.